Here is a 547-residue protein sequence, read N- to C-terminus: Glucose-6-phosphate isomerase (547 aa).

Residue glutamate 351 is the Proton donor of the active site. Catalysis depends on residues histidine 382 and lysine 509.

This sequence belongs to the GPI family.

The protein localises to the cytoplasm. It catalyses the reaction alpha-D-glucose 6-phosphate = beta-D-fructose 6-phosphate. Its pathway is carbohydrate biosynthesis; gluconeogenesis. It functions in the pathway carbohydrate degradation; glycolysis; D-glyceraldehyde 3-phosphate and glycerone phosphate from D-glucose: step 2/4. Catalyzes the reversible isomerization of glucose-6-phosphate to fructose-6-phosphate. The polypeptide is Glucose-6-phosphate isomerase (Coxiella burnetii (strain CbuK_Q154) (Coxiella burnetii (strain Q154))).